The primary structure comprises 180 residues: Inner membrane-spanning protein YciB (180 aa).

A run of 5 helical transmembrane segments spans residues 25–45, 49–69, 76–96, 118–138, and 150–170; these read QNAT…CYVI, VSKL…ITLI, IKIK…MSGI, IILS…NEIV, and FKVF…LPLL.

The protein belongs to the YciB family.

It is found in the cell inner membrane. Its function is as follows. Plays a role in cell envelope biogenesis, maintenance of cell envelope integrity and membrane homeostasis. The chain is Inner membrane-spanning protein YciB from Rickettsia felis (strain ATCC VR-1525 / URRWXCal2) (Rickettsia azadi).